Consider the following 508-residue polypeptide: Adenosine deaminase (508 aa).

A signal peptide spans 1 to 18 (MFSQLVVWLLATSTVCLA).

It belongs to the metallo-dependent hydrolases superfamily. Adenosine and AMP deaminases family. ADGF subfamily. It depends on Zn(2+) as a cofactor. Salivary gland (at protein level).

It is found in the secreted. The catalysed reaction is adenosine + H2O + H(+) = inosine + NH4(+). Its function is as follows. Catalyzes the deamination of adenosine to inosine. The sequence is that of Adenosine deaminase from Lutzomyia longipalpis (Sand fly).